The primary structure comprises 1212 residues: Periplasmic/secreted acid trehalase ATH1 (1212 aa).

Residues 1 to 82 are Cytoplasmic-facing; sequence MGFKDKILFW…STRVKIRRQN (82 aa). Residues 83–103 form a helical membrane-spanning segment; the sequence is ILNTTLILGMLIALVIWTAIL. Topologically, residues 104-1212 are periplasmic; sequence STNSYFSSSL…ATIREIVLQE (1109 aa). Asparagine 243, asparagine 275, asparagine 296, asparagine 362, asparagine 414, asparagine 428, and asparagine 521 each carry an N-linked (GlcNAc...) asparagine glycan. Position 546 to 547 (546 to 547) interacts with substrate; that stretch reads WD. Residues asparagine 572, asparagine 601, asparagine 661, and asparagine 671 are each glycosylated (N-linked (GlcNAc...) asparagine). Glutamate 677 functions as the Proton donor in the catalytic mechanism. N-linked (GlcNAc...) asparagine glycans are attached at residues asparagine 729 and asparagine 738. A substrate-binding site is contributed by 744-745; the sequence is KQ. Asparagine 912, asparagine 938, asparagine 993, asparagine 1011, asparagine 1033, asparagine 1052, asparagine 1070, asparagine 1097, and asparagine 1165 each carry an N-linked (GlcNAc...) asparagine glycan.

The protein belongs to the glycosyl hydrolase 65 family. In terms of assembly, homodimer.

It is found in the secreted. The protein resides in the periplasm. The protein localises to the membrane. It carries out the reaction alpha,alpha-trehalose + H2O = alpha-D-glucose + beta-D-glucose. Its function is as follows. Periplasmic/secreted acid trehalase that catalyzes hydrolysis of the disaccharide trehalose and required for growth on trehalose as carbon source. Growth on trehalose is not restricted to respiration. The polypeptide is Periplasmic/secreted acid trehalase ATH1 (Candida glabrata (Yeast)).